Consider the following 707-residue polypeptide: DCC-interacting protein 13-alpha (707 aa).

The segment at 1-428 (MPGIDKLPIE…PPTARTSSSG (428 aa)) is required for RAB5A binding. The BAR domain maps to 3–268 (GIDKLPIEET…DPLYLPDPDP (266 aa)). Positions 234–257 (QNVRREMDGDVETMQQTIEDLEVA) form a coiled coil. Positions 277–375 (LTRKAGYLNA…WICTINNISK (99 aa)) constitute a PH domain. 3 disordered regions span residues 397–433 (AVTP…LGSE), 466–490 (GQAK…STKS), and 636–707 (EKQK…ESEA). The residue at position 399 (Thr399) is a Phosphothreonine. At Ser401 the chain carries Phosphoserine. Positions 403-414 (SFQQRHESLRPG) match the F&amp;H motif. Ser410 carries the phosphoserine; by PKA modification. In terms of domain architecture, PID spans 495 to 655 (SILHQLFIVR…EKQQKELSKQ (161 aa)). Residues 620–670 (LAKQIALHAELDRRASEKQKEIERVKEKQQKELSKQKQIEKDLEEQSRLIA) adopt a coiled-coil conformation. Residues 636–666 (EKQKEIERVKEKQQKELSKQKQIEKDLEEQS) are compositionally biased toward basic and acidic residues. Over residues 679 to 691 (GSEGQLVLSSSQS) the composition is skewed to low complexity. Residues Ser691 and Ser694 each carry the phosphoserine modification. Basic and acidic residues predominate over residues 698–707 (EEGKKRESEA).

Homodimer. Binds RAB5A/Rab5 through an N-terminal domain. This interaction is essential for its recruitment to endosomal membranes as well as its role in cell proliferation. Binds DCC and the catalytic domain of the inactive form of AKT2 through its PID domain. Binds PIK3CA and subunits of the NuRD/MeCP1 complex. Interacts with OCRL and INPP5B. Interacts with NTRK2. Interacts with APPL2; interaction is independent of follicle stimulating hormone stimulation; interaction is decreased by adiponectin in a time-dependent manner. Forms a complex with APPL2 and RUVBL2. Forms a complex comprising APPL2, RUVBL2, CTNNB1, HDAC1 and HDAC2; interaction reduces interaction between CTNNB1, HDAC1, HDAC2 and RUVBL2 leading to the decrease of deacetylase activity of this complex; affects the recruitment of repressive complexes to the Wnt target genes. Interacts with ANXA2. Interacts with TGFBR1; interaction is TGF beta dependent; mediates trafficking of the TGFBR1 from the endosomes to the nucleus via microtubules in a TRAF6-dependent manner. Interacts with PRKCZ. Interacts with PIK3R1 and APPL2. Interacts with ADIPOR1; ADIPOQ enhances this interaction; inhibites adiponectin-stimulated binding of APPL2 to ADIPOR1. In terms of processing, phosphorylation at Ser-410 by PKA severely impairs binding to OCRL. Expressed in insulin-target tissues including skeletal muscle, liver, fat, and brain.

It localises to the early endosome membrane. The protein resides in the nucleus. Its subcellular location is the cytoplasm. The protein localises to the endosome. It is found in the cell projection. It localises to the ruffle. The protein resides in the cytoplasmic vesicle. Its subcellular location is the phagosome. In terms of biological role, multifunctional adapter protein that binds to various membrane receptors, nuclear factors and signaling proteins to regulate many processes, such as cell proliferation, immune response, endosomal trafficking and cell metabolism. Regulates signaling pathway leading to cell proliferation through interaction with RAB5A and subunits of the NuRD/MeCP1 complex. Functions as a positive regulator of innate immune response via activation of AKT1 signaling pathway by forming a complex with APPL1 and PIK3R1. Inhibits Fc-gamma receptor-mediated phagocytosis through PI3K/Akt signaling in macrophages. Regulates TLR4 signaling in activated macrophages. Involved in trafficking of the TGFBR1 from the endosomes to the nucleus via microtubules in a TRAF6-dependent manner. Plays a role in cell metabolism by regulating adiponecting and insulin signaling pathways. Required for fibroblast migration through HGF cell signaling. Positive regulator of beta-catenin/TCF-dependent transcription through direct interaction with RUVBL2/reptin resulting in the relief of RUVBL2-mediated repression of beta-catenin/TCF target genes by modulating the interactions within the beta-catenin-reptin-HDAC complex. The protein is DCC-interacting protein 13-alpha of Mus musculus (Mouse).